Reading from the N-terminus, the 179-residue chain is Macro domain-containing protein XCC3184 (179 aa).

Residues 1–175 (MRIEVWQGDI…AYHQALATQE (175 aa)) form the Macro domain.

Belongs to the MacroD-type family.

The polypeptide is Macro domain-containing protein XCC3184 (Xanthomonas campestris pv. campestris (strain ATCC 33913 / DSM 3586 / NCPPB 528 / LMG 568 / P 25)).